The following is a 276-amino-acid chain: 2,3,4,5-tetrahydropyridine-2,6-dicarboxylate N-succinyltransferase (276 aa).

Arginine 104 and aspartate 141 together coordinate substrate.

It belongs to the transferase hexapeptide repeat family. Homotrimer.

Its subcellular location is the cytoplasm. The enzyme catalyses (S)-2,3,4,5-tetrahydrodipicolinate + succinyl-CoA + H2O = (S)-2-succinylamino-6-oxoheptanedioate + CoA. Its pathway is amino-acid biosynthesis; L-lysine biosynthesis via DAP pathway; LL-2,6-diaminopimelate from (S)-tetrahydrodipicolinate (succinylase route): step 1/3. This chain is 2,3,4,5-tetrahydropyridine-2,6-dicarboxylate N-succinyltransferase, found in Legionella pneumophila (strain Paris).